Consider the following 333-residue polypeptide: Ketol-acid reductoisomerase (NADP(+)) (333 aa).

The 181-residue stretch at 2 to 182 folds into the KARI N-terminal Rossmann domain; sequence ANIYYDDSCD…GGGRAGILET (181 aa). NADP(+)-binding positions include 25–28, Arg-48, Ser-51, Ser-53, and 83–86; these read YGSQ and DTIQ. Residue His-108 is part of the active site. Gly-134 is an NADP(+) binding site. Residues 183 to 331 enclose the KARI C-terminal knotted domain; that stretch reads SFREETETDL…TKLRSMMKWL (149 aa). The Mg(2+) site is built by Asp-191, Glu-195, Glu-227, and Glu-231. Substrate is bound at residue Ser-252.

This sequence belongs to the ketol-acid reductoisomerase family. It depends on Mg(2+) as a cofactor.

The enzyme catalyses (2R)-2,3-dihydroxy-3-methylbutanoate + NADP(+) = (2S)-2-acetolactate + NADPH + H(+). It catalyses the reaction (2R,3R)-2,3-dihydroxy-3-methylpentanoate + NADP(+) = (S)-2-ethyl-2-hydroxy-3-oxobutanoate + NADPH + H(+). Its pathway is amino-acid biosynthesis; L-isoleucine biosynthesis; L-isoleucine from 2-oxobutanoate: step 2/4. It participates in amino-acid biosynthesis; L-valine biosynthesis; L-valine from pyruvate: step 2/4. Involved in the biosynthesis of branched-chain amino acids (BCAA). Catalyzes an alkyl-migration followed by a ketol-acid reduction of (S)-2-acetolactate (S2AL) to yield (R)-2,3-dihydroxy-isovalerate. In the isomerase reaction, S2AL is rearranged via a Mg-dependent methyl migration to produce 3-hydroxy-3-methyl-2-ketobutyrate (HMKB). In the reductase reaction, this 2-ketoacid undergoes a metal-dependent reduction by NADPH to yield (R)-2,3-dihydroxy-isovalerate. The protein is Ketol-acid reductoisomerase (NADP(+)) of Leptospira biflexa serovar Patoc (strain Patoc 1 / Ames).